The following is a 431-amino-acid chain: MKMQSPKMEQEEVEEERMRNKWPWMKAAQLMEFRMQALVYRYIEAGLRVPHHLVVPIWNSLALSSSSNYNYHSSSLLSNKGVTHIDTLETEPTRCRRTDGKKWRCSNTVLLFEKYCERHMHRGRKRSRKLVESSSEVASSSTKYDNTYGLDRYNESQSHLHGTISGSSNAQVVTIASLPSARSCENVIRPSLVISEFTNKSVSHGRKNMEMSYDDFINEKEASMCVGVVPLQGDESKPSVQKFFPEVSDKCLEAAKFSSNRKNDIIARSREWKNMNVNGGLFHGIHFSPDTVLQERGCFRLQGVETDNEPGRCRRTDGKKWRCSKDVLSGQKYCDKHMHRGMKKKHPVDTTNSHENAGFSPLTVETAVRSVVPCKDGDDQKHSVSVMGITLPRVSDEKSTSSCSTDTTITDTALRGEDDDEEYLSLFSPGV.

The region spanning 24-59 (WMKAAQLMEFRMQALVYRYIEAGLRVPHHLVVPIWN) is the QLQ domain. WRC domains follow at residues 89–133 (ETEP…LVES) and 307–351 (DNEP…VDTT). Short sequence motifs (bipartite nuclear localization signal) lie at residues 94 to 104 (RCRRTDGKKWR), 122 to 129 (RGRKRSRK), 312 to 322 (RCRRTDGKKWR), and 340 to 345 (RGMKKK).

Belongs to the GRF family. As to quaternary structure, interacts with GIF1. As to expression, detected in the shoot apical meristem (SAM) and in young leaf primordium.

The protein resides in the nucleus. Functionally, transcription activator that plays a role in the regulation of cell expansion in leaf and cotyledons tissues. Component of a network formed by miR396, the GRFs and their interacting factors (GIFs) acting in the regulation of meristem function, at least partially through the control of cell proliferation. This Arabidopsis thaliana (Mouse-ear cress) protein is Growth-regulating factor 9 (GRF9).